The sequence spans 378 residues: Ribosomal RNA large subunit methyltransferase G (378 aa).

The protein belongs to the methyltransferase superfamily. RlmG family.

Its subcellular location is the cytoplasm. It carries out the reaction guanosine(1835) in 23S rRNA + S-adenosyl-L-methionine = N(2)-methylguanosine(1835) in 23S rRNA + S-adenosyl-L-homocysteine + H(+). Specifically methylates the guanine in position 1835 (m2G1835) of 23S rRNA. This chain is Ribosomal RNA large subunit methyltransferase G, found in Shigella flexneri.